The following is an 88-amino-acid chain: Small ribosomal subunit protein bS20 (88 aa).

This sequence belongs to the bacterial ribosomal protein bS20 family.

Its function is as follows. Binds directly to 16S ribosomal RNA. The protein is Small ribosomal subunit protein bS20 of Renibacterium salmoninarum (strain ATCC 33209 / DSM 20767 / JCM 11484 / NBRC 15589 / NCIMB 2235).